The primary structure comprises 74 residues: Cytoplasmic envelopment protein 3 (74 aa).

The N-myristoyl glycine; by host moiety is linked to residue glycine 2. The Di-leucine-like internalization motif motif lies at 15-16 (LV). The tract at residues 34 to 40 (SMEEFDI) is asp/Glu-rich (acidic). Residues 36–74 (EEFDIPPPPPLPKPVFKQPGPYKIPARSQRCPSKRRDPY) form a disordered region.

Belongs to the herpesviridae cytoplasmic envelopment protein 3 family. Interacts with cytoplasmic envelopment protein 2; this interaction is essential for the proper localization of each protein to the assembly complex and thus for the production of infectious virus. Post-translationally, myristoylation and palmitoylation (probably on one or more of the nearby cysteines at the N-terminus) enable membrane-binding and Golgi apparatus-specific targeting and are essential for efficient packaging. In terms of processing, phosphorylated. Phosphorylation does not seem to be required for recycling to the host Golgi apparatus. Packaging is selective for underphosphorylated forms.

It localises to the virion tegument. The protein localises to the virion membrane. It is found in the host cell membrane. The protein resides in the host Golgi apparatus membrane. Its function is as follows. Plays an important role in the cytoplasmic envelopment of tegument proteins and capsids during the assembly and egress processes. Also participates in viral entry at the fusion step probably by regulating the core fusion machinery. This chain is Cytoplasmic envelopment protein 3, found in Equine herpesvirus 1 (strain Ab4p) (EHV-1).